Reading from the N-terminus, the 101-residue chain is Large ribosomal subunit protein uL23 (101 aa).

Belongs to the universal ribosomal protein uL23 family. Part of the 50S ribosomal subunit. Contacts protein L29, and trigger factor when it is bound to the ribosome.

Functionally, one of the early assembly proteins it binds 23S rRNA. One of the proteins that surrounds the polypeptide exit tunnel on the outside of the ribosome. Forms the main docking site for trigger factor binding to the ribosome. The sequence is that of Large ribosomal subunit protein uL23 from Corynebacterium efficiens (strain DSM 44549 / YS-314 / AJ 12310 / JCM 11189 / NBRC 100395).